We begin with the raw amino-acid sequence, 90 residues long: Small ribosomal subunit protein uS15c (90 aa).

This sequence belongs to the universal ribosomal protein uS15 family. Part of the 30S ribosomal subunit.

The protein resides in the plastid. The protein localises to the chloroplast. The polypeptide is Small ribosomal subunit protein uS15c (rps15-A) (Zea mays (Maize)).